The sequence spans 122 residues: Small ribosomal subunit protein uS13 (122 aa).

The tract at residues 95–122 (GLPVRGQRTHTNARTRKGPAKPIAGKKK) is disordered.

This sequence belongs to the universal ribosomal protein uS13 family. Part of the 30S ribosomal subunit. Forms a loose heterodimer with protein S19. Forms two bridges to the 50S subunit in the 70S ribosome.

Functionally, located at the top of the head of the 30S subunit, it contacts several helices of the 16S rRNA. In the 70S ribosome it contacts the 23S rRNA (bridge B1a) and protein L5 of the 50S subunit (bridge B1b), connecting the 2 subunits; these bridges are implicated in subunit movement. Contacts the tRNAs in the A and P-sites. The chain is Small ribosomal subunit protein uS13 from Xanthobacter autotrophicus (strain ATCC BAA-1158 / Py2).